Here is a 699-residue protein sequence, read N- to C-terminus: Polyribonucleotide nucleotidyltransferase (699 aa).

Mg(2+)-binding residues include aspartate 484 and aspartate 490. One can recognise a KH domain in the interval 551–610 (PRITTIQVKPDQVRTVIGPGGKNVRGIIEATGCAIDIEDDGRINIASADGDACKAAIKMI). Residues 620–688 (GKLYMATVKK…RQGKIKLSRK (69 aa)) form the S1 motif domain.

The protein belongs to the polyribonucleotide nucleotidyltransferase family. It depends on Mg(2+) as a cofactor.

Its subcellular location is the cytoplasm. It catalyses the reaction RNA(n+1) + phosphate = RNA(n) + a ribonucleoside 5'-diphosphate. In terms of biological role, involved in mRNA degradation. Catalyzes the phosphorolysis of single-stranded polyribonucleotides processively in the 3'- to 5'-direction. The polypeptide is Polyribonucleotide nucleotidyltransferase (Syntrophotalea carbinolica (strain DSM 2380 / NBRC 103641 / GraBd1) (Pelobacter carbinolicus)).